We begin with the raw amino-acid sequence, 1018 residues long: Serine/threonine-protein phosphatase BSL2 (1018 aa).

The tract at residues 1 to 75 (MDEDSSMVAD…AAAVVGQEQQ (75 aa)) is disordered. Residues 41–57 (SPPPEGGSVPTPPPSDP) are compositionally biased toward pro residues. Residues 63-75 (QQQAAAVVGQEQQ) show a composition bias toward low complexity. Kelch repeat units lie at residues 149 to 195 (TSAG…VATA), 253 to 301 (YLMA…TASA), 306 to 356 (LLLL…VFVN), 362 to 409 (SGGA…DAAG), and 430 to 479 (LIFI…RLPG). The segment at 569 to 590 (DRDCGAEATPSGKPTFSLIKPD) is disordered. Serine 627 carries the phosphoserine modification. Positions 720, 722, 754, and 786 each coordinate Mn(2+). The active-site Proton donor is the histidine 787. The Mn(2+) site is built by histidine 839 and histidine 918. Position 975 is a phosphoserine (serine 975). The segment covering 994–1011 (ANRPATPTRGRPQNSNDR) has biased composition (polar residues). The tract at residues 994–1018 (ANRPATPTRGRPQNSNDRGGSLAWM) is disordered.

The protein belongs to the PPP phosphatase family. BSU subfamily. Interacts with BSK8. Mn(2+) is required as a cofactor. In terms of tissue distribution, expressed throughout the plant, with a higher level in younger parts.

It localises to the cytoplasm. Its subcellular location is the cell membrane. It is found in the nucleus. The catalysed reaction is O-phospho-L-seryl-[protein] + H2O = L-seryl-[protein] + phosphate. It carries out the reaction O-phospho-L-threonyl-[protein] + H2O = L-threonyl-[protein] + phosphate. Phosphatase involved in elongation process, probably by acting as a regulator of brassinolide signaling. This chain is Serine/threonine-protein phosphatase BSL2 (BSL2), found in Arabidopsis thaliana (Mouse-ear cress).